The chain runs to 91 residues: Signal recognition particle 19 kDa protein (91 aa).

Belongs to the SRP19 family. Part of the signal recognition particle protein translocation system, which is composed of SRP and FtsY. Archaeal SRP consists of a 7S RNA molecule of 300 nucleotides and two protein subunits: SRP54 and SRP19.

The protein localises to the cytoplasm. In terms of biological role, involved in targeting and insertion of nascent membrane proteins into the cytoplasmic membrane. Binds directly to 7S RNA and mediates binding of the 54 kDa subunit of the SRP. The polypeptide is Signal recognition particle 19 kDa protein (Methanothermobacter thermautotrophicus (strain ATCC 29096 / DSM 1053 / JCM 10044 / NBRC 100330 / Delta H) (Methanobacterium thermoautotrophicum)).